Reading from the N-terminus, the 534-residue chain is CTP synthase (534 aa).

The amidoligase domain stretch occupies residues 1–267; the sequence is MTKYIFVTGG…DQIVCDHLKL (267 aa). S13 is a binding site for CTP. S13 provides a ligand contact to UTP. 14–19 provides a ligand contact to ATP; the sequence is SIGKGI. Y54 is a binding site for L-glutamine. Position 71 (D71) interacts with ATP. Residues D71 and E141 each contribute to the Mg(2+) site. Residues 148–150, 188–193, and K224 contribute to the CTP site; these read DIE and KTKPTQ. UTP contacts are provided by residues 188–193 and K224; that span reads KTKPTQ. A Glutamine amidotransferase type-1 domain is found at 292–534; the sequence is KIALVGKYVE…FVTAAVENAK (243 aa). Position 354 (G354) interacts with L-glutamine. C381 serves as the catalytic Nucleophile; for glutamine hydrolysis. L-glutamine is bound by residues 382–385, E405, and R463; that span reads LGMQ. Active-site residues include H508 and E510.

This sequence belongs to the CTP synthase family. As to quaternary structure, homotetramer.

The catalysed reaction is UTP + L-glutamine + ATP + H2O = CTP + L-glutamate + ADP + phosphate + 2 H(+). It catalyses the reaction L-glutamine + H2O = L-glutamate + NH4(+). It carries out the reaction UTP + NH4(+) + ATP = CTP + ADP + phosphate + 2 H(+). It functions in the pathway pyrimidine metabolism; CTP biosynthesis via de novo pathway; CTP from UDP: step 2/2. With respect to regulation, allosterically activated by GTP, when glutamine is the substrate; GTP has no effect on the reaction when ammonia is the substrate. The allosteric effector GTP functions by stabilizing the protein conformation that binds the tetrahedral intermediate(s) formed during glutamine hydrolysis. Inhibited by the product CTP, via allosteric rather than competitive inhibition. In terms of biological role, catalyzes the ATP-dependent amination of UTP to CTP with either L-glutamine or ammonia as the source of nitrogen. Regulates intracellular CTP levels through interactions with the four ribonucleotide triphosphates. This Streptococcus thermophilus (strain ATCC BAA-250 / LMG 18311) protein is CTP synthase.